Here is a 532-residue protein sequence, read N- to C-terminus: Protein tweety homolog 2 (532 aa).

Residues 1–44 are Extracellular-facing; it reads MPAARVEYIAPWWVVWLHSVPHLGLRLQRVDSTFSPGDETYQES. A helical transmembrane segment spans residues 45-65; sequence LLFLGVLAAIGLGLNLIFLTV. The Cytoplasmic segment spans residues 66 to 87; it reads YLVCTCCCRRDHTVQTKQQESC. Residues 88–108 form a helical membrane-spanning segment; that stretch reads CVTWTAVVAGLLCCAAVGVGF. Residues 109–213 lie on the Extracellular side of the membrane; it reads YGNSETNDGM…QTAYVEYYRW (105 aa). Glu113 and Asp116 together coordinate Ca(2+). Residue Asn129 is glycosylated (N-linked (GlcNAc...) asparagine). The short motif at 164 to 166 is the RGD element; that stretch reads RGD. Thr199 bears the Phosphothreonine mark. The chain crosses the membrane as a helical span at residues 214–234; it reads LSYLLLFILDLVICLVTCLGL. The Cytoplasmic segment spans residues 235–240; sequence ARRSKC. The helical transmembrane segment at 241–261 threads the bilayer; sequence LLASMLCCGILTLILSWASLA. At 262-385 the chain is on the extracellular side; the sequence is ADAAAAVGTS…DALTGICYDG (124 aa). Cystine bridges form between Cys274/Cys382 and Cys300/Cys367. 2 N-linked (GlcNAc...) asparagine glycosylation sites follow: Asn283 and Asn352. Residues 386–406 traverse the membrane as a helical segment; sequence IEGLLFLGLFSLLAALAFSTL. Over 407 to 532 the chain is Cytoplasmic; it reads TCAGPRAWKY…EHLRHYEFPS (126 aa). Ser504 is subject to Phosphoserine. Positions 506 to 509 match the PY-motif; mediates interaction with NEDD4L motif; sequence PPTY.

This sequence belongs to the tweety family. As to quaternary structure, forms cis-homodimers in the presence of Ca(+2) and forms monomers and trans-dimers in the absence of Ca(2+). Interacts with NEDD4L. Post-translationally, ubiquitinated by NEDD4L, leading to its proteasomal degradation.

The protein resides in the cell membrane. The enzyme catalyses chloride(in) = chloride(out). It catalyses the reaction L-glutamate(out) = L-glutamate(in). Its activity is regulated as follows. Inhibited by (4-[(2-butyl-6,7-dichloro-2- cyclopentyl-2,3-dihydro-1-oxo-1H-inden-5-yl)oxy]butanoic acid). Calcium-independent, swelling-dependent volume-regulated anion channel (VRAC-swell) which plays a pivotal role in the process of regulatory volume decrease (RVD) in the brain through the efflux of anions like chloride and organic osmolytes like glutamate. Probable large-conductance Ca(2+)-activated chloride channel. The sequence is that of Protein tweety homolog 2 (Ttyh2) from Mus musculus (Mouse).